Consider the following 451-residue polypeptide: Probable D-serine dehydratase (451 aa).

Residues 1–55 (MPGRTRPSCRLAITFTPRPDSATPRAGRAAPATGRRSNRSRSTLSATASPMPRRP) are disordered. Residues 22–35 (ATPRAGRAAPATGR) show a composition bias toward low complexity. Residue K118 is modified to N6-(pyridoxal phosphate)lysine.

Belongs to the serine/threonine dehydratase family. DsdA subfamily. Pyridoxal 5'-phosphate serves as cofactor.

The catalysed reaction is D-serine = pyruvate + NH4(+). This is Probable D-serine dehydratase from Paracidovorax citrulli (strain AAC00-1) (Acidovorax citrulli).